We begin with the raw amino-acid sequence, 346 residues long: Methylthioribose-1-phosphate isomerase (346 aa).

Residues 50-52, Arg-93, and Gln-196 contribute to the substrate site; that span reads RGA. Asp-237 functions as the Proton donor in the catalytic mechanism. 247–248 contributes to the substrate binding site; the sequence is NK.

The protein belongs to the eIF-2B alpha/beta/delta subunits family. MtnA subfamily.

The catalysed reaction is 5-(methylsulfanyl)-alpha-D-ribose 1-phosphate = 5-(methylsulfanyl)-D-ribulose 1-phosphate. It functions in the pathway amino-acid biosynthesis; L-methionine biosynthesis via salvage pathway; L-methionine from S-methyl-5-thio-alpha-D-ribose 1-phosphate: step 1/6. Functionally, catalyzes the interconversion of methylthioribose-1-phosphate (MTR-1-P) into methylthioribulose-1-phosphate (MTRu-1-P). This is Methylthioribose-1-phosphate isomerase from Alkalilimnicola ehrlichii (strain ATCC BAA-1101 / DSM 17681 / MLHE-1).